A 30-amino-acid chain; its full sequence is U5-ctenitoxin-Pk1b (30 aa).

2 disulfides stabilise this stretch: Cys6-Cys23 and Cys13-Cys29.

This sequence belongs to the neurotoxin 04 (omega-agtx) family. 02 (Tx1) subfamily. In terms of tissue distribution, expressed by the venom gland.

The protein resides in the secreted. Functionally, lethal neurotoxin. Causes spastic paralysis and death in mice in 4-6 minutes after intracerebroventricular injection at dose levels of 1.5 ug per mouse. The sequence is that of U5-ctenitoxin-Pk1b from Phoneutria keyserlingi (Brazilian wandering spider).